Reading from the N-terminus, the 136-residue chain is Large ribosomal subunit protein uL16 (136 aa).

This sequence belongs to the universal ribosomal protein uL16 family. In terms of assembly, part of the 50S ribosomal subunit.

Binds 23S rRNA and is also seen to make contacts with the A and possibly P site tRNAs. This Elusimicrobium minutum (strain Pei191) protein is Large ribosomal subunit protein uL16.